Consider the following 583-residue polypeptide: Aspartate--tRNA ligase (583 aa).

Position 174 (E174) interacts with L-aspartate. The segment at 198–201 is aspartate; that stretch reads QITK. R220 is an L-aspartate binding site. ATP-binding positions include 220 to 222 and Q229; that span reads RDE. L-aspartate is bound at residue H443. E477 is a binding site for ATP. Position 484 (R484) interacts with L-aspartate. Residue 529 to 532 participates in ATP binding; it reads GLDR.

The protein belongs to the class-II aminoacyl-tRNA synthetase family. Type 1 subfamily. In terms of assembly, homodimer.

It is found in the cytoplasm. The catalysed reaction is tRNA(Asp) + L-aspartate + ATP = L-aspartyl-tRNA(Asp) + AMP + diphosphate. Functionally, catalyzes the attachment of L-aspartate to tRNA(Asp) in a two-step reaction: L-aspartate is first activated by ATP to form Asp-AMP and then transferred to the acceptor end of tRNA(Asp). This chain is Aspartate--tRNA ligase, found in Streptococcus suis (strain 98HAH33).